Consider the following 700-residue polypeptide: Elongation factor G (700 aa).

The 277-residue stretch at 10-286 (NKVRNIGIMA…AVIDYLPNPL (277 aa)) folds into the tr-type G domain. Residues 19–26 (AHIDAGKT), 83–87 (DTPGH), and 137–140 (NKMD) each bind GTP.

Belongs to the TRAFAC class translation factor GTPase superfamily. Classic translation factor GTPase family. EF-G/EF-2 subfamily.

It localises to the cytoplasm. In terms of biological role, catalyzes the GTP-dependent ribosomal translocation step during translation elongation. During this step, the ribosome changes from the pre-translocational (PRE) to the post-translocational (POST) state as the newly formed A-site-bound peptidyl-tRNA and P-site-bound deacylated tRNA move to the P and E sites, respectively. Catalyzes the coordinated movement of the two tRNA molecules, the mRNA and conformational changes in the ribosome. The protein is Elongation factor G of Rhodococcus jostii (strain RHA1).